A 442-amino-acid polypeptide reads, in one-letter code: Chitinase-like protein Idgf4 (442 aa).

The signal sequence occupies residues 1–21 (MKLYALFSLLVGSLAIGQISA). The region spanning 25–442 (HHLLCYYDGN…PILRQVKSKL (418 aa)) is the GH18 domain. A disulfide bridge connects residues cysteine 29 and cysteine 56. Residue asparagine 224 is glycosylated (N-linked (GlcNAc...) asparagine). A disulfide bridge links cysteine 343 with cysteine 426.

The protein belongs to the glycosyl hydrolase 18 family. IDGF subfamily. Glycosylated. In terms of tissue distribution, primarily expressed in yolk cells and fat body. In larvae, it is expressed in the imaginal ring, the salivary duct, large salivary gland cells and weakly expressed in imaginal disks. More strongly expressed than Idgf1 and Idgf3.

The protein resides in the secreted. In terms of biological role, cooperates with insulin-like peptides to stimulate the proliferation, polarization and motility of imaginal disk cells. May act by stabilizing the binding of insulin-like peptides to its receptor through a simultaneous interaction with both molecules to form a multiprotein signaling complex. The sequence is that of Chitinase-like protein Idgf4 (Idgf4) from Drosophila melanogaster (Fruit fly).